Consider the following 137-residue polypeptide: Protein cornichon homolog 4 (137 aa).

3 helical membrane-spanning segments follow: residues leucine 8 to leucine 28, phenylalanine 53 to leucine 73, and leucine 113 to aspartate 133.

Belongs to the cornichon family.

It is found in the membrane. The protein is Protein cornichon homolog 4 of Arabidopsis thaliana (Mouse-ear cress).